The chain runs to 206 residues: RNA pyrophosphohydrolase (206 aa).

Residues Gly-6–Arg-149 enclose the Nudix hydrolase domain. The Nudix box signature appears at Gly-38–Gly-59. Residues Met-175 to Ser-206 are disordered.

It belongs to the Nudix hydrolase family. RppH subfamily. A divalent metal cation serves as cofactor.

Accelerates the degradation of transcripts by removing pyrophosphate from the 5'-end of triphosphorylated RNA, leading to a more labile monophosphorylated state that can stimulate subsequent ribonuclease cleavage. This is RNA pyrophosphohydrolase from Stenotrophomonas maltophilia (strain K279a).